The primary structure comprises 136 residues: Large ribosomal subunit protein uL16 (136 aa).

This sequence belongs to the universal ribosomal protein uL16 family. In terms of assembly, part of the 50S ribosomal subunit.

Functionally, binds 23S rRNA and is also seen to make contacts with the A and possibly P site tRNAs. The chain is Large ribosomal subunit protein uL16 from Edwardsiella ictaluri (strain 93-146).